The primary structure comprises 956 residues: Glutamyl aminopeptidase (956 aa).

Topologically, residues 1-21 (MILEERSSWEGSKRYCIKTKH) are cytoplasmic. Residues 22 to 42 (VAIICAVVVAVGLIVGLSVGL) form a helical; Signal-anchor for type II membrane protein membrane-spanning segment. Over 43-956 (TRSCDSTEGM…IRNWFLDLNG (914 aa)) the chain is Extracellular. The disordered stretch occupies residues 48–87 (STEGMTQGTTQGTTQAPSHLPPVTSPPEDQGVCPASEDES). The segment covering 49–62 (TEGMTQGTTQGTTQ) has biased composition (low complexity). N-linked (GlcNAc...) asparagine glycans are attached at residues Asn-126 and Asn-199. Position 225 (Glu-225) interacts with substrate. Asn-326 carries an N-linked (GlcNAc...) asparagine glycan. 359–363 (GAMEN) provides a ligand contact to substrate. Position 395 (His-395) interacts with Zn(2+). Residue Glu-396 is the Proton acceptor of the active site. 2 residues coordinate Zn(2+): His-399 and Glu-418. Asn-556, Asn-569, Asn-599, Asn-643, Asn-647, Asn-679, Asn-764, Asn-797, Asn-802, and Asn-829 each carry an N-linked (GlcNAc...) asparagine glycan. Arg-888 provides a ligand contact to substrate.

Belongs to the peptidase M1 family. In terms of assembly, homodimer; disulfide-linked. The cofactor is Zn(2+).

It is found in the cell membrane. It carries out the reaction Release of N-terminal glutamate (and to a lesser extent aspartate) from a peptide.. With respect to regulation, substrate specificity is modulated by calcium which enhances the enzymatic activity for cleavage of acidic residues while reducing its activity with basic residues. Inhibited by aminopeptidase inhibitors amastatin and bestatin. Its function is as follows. Regulates central hypertension through its calcium-modulated preference to cleave N-terminal acidic residues from peptides such as angiotensin II. This chain is Glutamyl aminopeptidase (ENPEP), found in Bos taurus (Bovine).